Consider the following 37-residue polypeptide: Large ribosomal subunit protein bL36 (37 aa).

It belongs to the bacterial ribosomal protein bL36 family.

The polypeptide is Large ribosomal subunit protein bL36 (Alkaliphilus oremlandii (strain OhILAs) (Clostridium oremlandii (strain OhILAs))).